Consider the following 616-residue polypeptide: Auxin efflux carrier component 4 (616 aa).

The Extracellular portion of the chain corresponds to M1–L7. The chain crosses the membrane as a helical span at residues Y8–V28. The Cytoplasmic portion of the chain corresponds to Q29 to Q38. Residues C39–I59 form a helical membrane-spanning segment. V51 lines the (indol-3-yl)acetate pocket. Residues S60–R70 lie on the Extracellular side of the membrane. A helical transmembrane segment spans residues F71–N91. Over L92 to M101 the chain is Cytoplasmic. The helical transmembrane segment at I102–I122 threads the bilayer. (indol-3-yl)acetate is bound by residues N112 and L114. Over A123–S131 the chain is Extracellular. The helical transmembrane segment at L132–F152 threads the bilayer. Y145 contributes to the (indol-3-yl)acetate binding site. Topologically, residues E153 to S476 are cytoplasmic. Phosphoserine occurs at positions 223, 240, and 280. The segment at A302–H343 is disordered. Residues E312–L334 show a composition bias toward polar residues. A phosphoserine mark is found at S358 and S395. Residues D390–E411 form a disordered region. Residues R398 to S409 are compositionally biased toward gly residues. The helical transmembrane segment at L477–L497 threads the bilayer. Topologically, residues Q498–S500 are extracellular. A helical transmembrane segment spans residues I501–A521. Residues L522 to T535 are Cytoplasmic-facing. A helical membrane pass occupies residues F536 to I556. At G557–D561 the chain is on the extracellular side. A helical transmembrane segment spans residues L562–A582. (indol-3-yl)acetate-binding residues include I576 and V577. Over K583–G595 the chain is Cytoplasmic. Residues V596 to L616 form a helical membrane-spanning segment.

It belongs to the auxin efflux carrier (TC 2.A.69.1) family. As to quaternary structure, homodimer. Expressed in the quiescent center precursors and surrounding cells. Present in columella cells of primary roots. Detected in pollen.

The protein resides in the cell membrane. Acts as a component of the auxin efflux carrier. Plays a role in generating a sink for auxin into columella cells. Maintains the endogenous auxin gradient, which is essential for correct root patterning. Involved in EXO70A3-regulated gravitropic responses in columella cells and in root system architecture (RSA). Together with PIN3 and PIN7, involved in the connective auxin transport (CAT) that ensures communication across the shoot system, and modulates strigolactone-mediated shoot branching control. The abcb19 pin3 pin4 pin7 quadruple mutant exhibits an additive phenotype on strigolactone-mediated bud outgrowth responses and shoot branching control. The chain is Auxin efflux carrier component 4 from Arabidopsis thaliana (Mouse-ear cress).